The following is a 137-amino-acid chain: Cellular retinoic acid-binding protein 1 (137 aa).

The Nuclear localization signal signature appears at R21–K31. Residue R132 to Y134 participates in all-trans-retinoate binding.

This sequence belongs to the calycin superfamily. Fatty-acid binding protein (FABP) family.

The protein resides in the cytoplasm. Its function is as follows. Cytosolic CRABPs may regulate the access of retinoic acid to the nuclear retinoic acid receptors. This chain is Cellular retinoic acid-binding protein 1 (CRABP1), found in Pelodiscus sinensis (Chinese softshell turtle).